The primary structure comprises 230 residues: 2,3-bisphosphoglycerate-dependent phosphoglycerate mutase (230 aa).

Residues 8 to 15 (RHGESEWN), 21 to 22 (TG), arginine 60, 87 to 90 (ERHY), lysine 98, 114 to 115 (RR), and 183 to 184 (GN) contribute to the substrate site. The Tele-phosphohistidine intermediate role is filled by histidine 9. Glutamate 87 functions as the Proton donor/acceptor in the catalytic mechanism.

The protein belongs to the phosphoglycerate mutase family. BPG-dependent PGAM subfamily.

The catalysed reaction is (2R)-2-phosphoglycerate = (2R)-3-phosphoglycerate. It participates in carbohydrate degradation; glycolysis; pyruvate from D-glyceraldehyde 3-phosphate: step 3/5. Catalyzes the interconversion of 2-phosphoglycerate and 3-phosphoglycerate. This Streptococcus thermophilus (strain CNRZ 1066) protein is 2,3-bisphosphoglycerate-dependent phosphoglycerate mutase.